We begin with the raw amino-acid sequence, 410 residues long: Angiopoietin-related protein 4 (410 aa).

The first 23 residues, 1-23 (MRCAPTAGAALVLCAATAGLLSA), serve as a signal peptide directing secretion. The tract at residues 79 to 101 (ACQGPKGKDAPFKDSEDRVPEGQ) is disordered. A compositionally biased stretch (basic and acidic residues) spans 84 to 98 (KGKDAPFKDSEDRVP). A coiled-coil region spans residues 104-152 (ETLQSLQTQLKAQNSKIQQLFQKVAQQQRYLSKQNLRIQNLQSQIDLLA). An N-linked (GlcNAc...) asparagine glycan is attached at Asn-181. The Fibrinogen C-terminal domain occupies 183–405 (THLHRPPRDC…ATTLLIQPME (223 aa)). Cysteines 192 and 220 form a disulfide. Asn-236 and Asn-242 each carry an N-linked (GlcNAc...) asparagine glycan. Cys-345 and Cys-358 are joined by a disulfide.

Homooligomer; disulfide-linked via Cys residues in the N-terminal part of the protein. The homooligomer undergoes proteolytic processing to release the ANGPTL4 C-terminal chain, which circulates as a monomer. The homooligomer unprocessed form is able to interact with the extracellular matrix. N-glycosylated. Post-translationally, forms disulfide-linked dimers and tetramers. In terms of processing, cleaved into a smaller N-terminal chain and a larger chain that contains the fibrinogen C-terminal domain; both cleaved and uncleaved forms are detected in the extracellular space. The cleaved form is not present within the cell. In terms of tissue distribution, detected in liver and kidney. Predominantly expressed in adipose tissue and is strongly up-regulated by fasting in white adipose tissue and liver. More abundant in areas of lower flow stress in the inner curvature compared to the outer curvature regions of the aorta (at protein level).

It is found in the secreted. The protein localises to the extracellular space. It localises to the extracellular matrix. Its function is as follows. Mediates inactivation of the lipoprotein lipase LPL, and thereby plays a role in the regulation of triglyceride clearance from the blood serum and in lipid metabolism. May also play a role in regulating glucose homeostasis and insulin sensitivity. Inhibits proliferation, migration, and tubule formation of endothelial cells and reduces vascular leakage. Upon heterologous expression, inhibits the adhesion of endothelial cell to the extracellular matrix (ECM), and inhibits the reorganization of the actin cytoskeleton, formation of actin stress fibers and focal adhesions in endothelial cells that have adhered to ANGPTL4-containing ECM (in vitro). Depending on context, may modulate tumor-related angiogenesis. In terms of biological role, mediates inactivation of the lipoprotein lipase LPL, and thereby plays an important role in the regulation of triglyceride clearance from the blood serum and in lipid metabolism. Has higher activity in LPL inactivation than the uncleaved protein. The sequence is that of Angiopoietin-related protein 4 (Angptl4) from Mus musculus (Mouse).